The sequence spans 269 residues: MTALPRYAVFGNPVAHSKSPQIHQQFTLQEGVDIEYGRICADIDGFAQAVSTFFETGGCGANVTVPFKQEAFALADEHSDRALAAGAVNTLILLKNGKLRGDNTDGIGLVNDITQVKNIAIEGKTILLLGAGGAVRGVIPVLKEHRPARIVIANRTHAKAEELARLFGIEAVPMADLNGGFDIIINGTSGGLSGQLPAVNPEIFRSCRLAYDMVYGDAAQTFLNFAQSNGAAEVSDGLGMLVGQAAASYHIWRGFTPDIRPVIEYMKAL.

Shikimate is bound by residues Ser-17–Ser-19 and Thr-64. The active-site Proton acceptor is the Lys-68. Asp-80 is a binding site for NADP(+). Shikimate-binding residues include Asn-89 and Asp-105. NADP(+) contacts are provided by residues Gly-130–Ala-134, Asn-154–Lys-159, and Met-213. Tyr-215 is a binding site for shikimate. Gly-237 is an NADP(+) binding site.

The protein belongs to the shikimate dehydrogenase family. As to quaternary structure, homodimer.

It catalyses the reaction shikimate + NADP(+) = 3-dehydroshikimate + NADPH + H(+). It functions in the pathway metabolic intermediate biosynthesis; chorismate biosynthesis; chorismate from D-erythrose 4-phosphate and phosphoenolpyruvate: step 4/7. Its function is as follows. Involved in the biosynthesis of the chorismate, which leads to the biosynthesis of aromatic amino acids. Catalyzes the reversible NADPH linked reduction of 3-dehydroshikimate (DHSA) to yield shikimate (SA). This Neisseria polysaccharea protein is Shikimate dehydrogenase (NADP(+)).